A 256-amino-acid polypeptide reads, in one-letter code: Type III pantothenate kinase 1 (256 aa).

6–13 (DIGNSHIF) contributes to the ATP binding site. 107-110 (GADR) lines the substrate pocket. The Proton acceptor role is filled by D109. D130 provides a ligand contact to K(+). T133 is an ATP binding site. T185 serves as a coordination point for substrate.

The protein belongs to the type III pantothenate kinase family. Homodimer. Requires NH4(+) as cofactor. The cofactor is K(+).

It is found in the cytoplasm. It carries out the reaction (R)-pantothenate + ATP = (R)-4'-phosphopantothenate + ADP + H(+). Its pathway is cofactor biosynthesis; coenzyme A biosynthesis; CoA from (R)-pantothenate: step 1/5. Its function is as follows. Catalyzes the phosphorylation of pantothenate (Pan), the first step in CoA biosynthesis. This is Type III pantothenate kinase 1 from Francisella tularensis subsp. holarctica (strain LVS).